The following is a 357-amino-acid chain: Arginine kinase (357 aa).

Residue Ala-2 is modified to N-acetylalanine. The region spanning 9–91 (KLEEGFKKLE…FDPIIEDYHK (83 aa)) is the Phosphagen kinase N-terminal domain. 64–68 (GVGVY) contacts L-arginine. In terms of domain architecture, Phosphagen kinase C-terminal spans 119-356 (FVISTRVRCG…LELIKIEKEM (238 aa)). ATP is bound by residues 122–126 (STRVR) and His-185. Glu-225 is a binding site for L-arginine. Arg-229 serves as a coordination point for ATP. Cys-271 is an L-arginine binding site. Residues 280–284 (RASVH) and 309–314 (RGTRGE) each bind ATP. Glu-314 contacts L-arginine.

Belongs to the ATP:guanido phosphotransferase family.

It catalyses the reaction L-arginine + ATP = N(omega)-phospho-L-arginine + ADP + H(+). This is Arginine kinase from Callinectes sapidus (Blue crab).